Consider the following 373-residue polypeptide: 2-oxoglutarate oxidoreductase subunit KorB (373 aa).

Positions 26–50 (TPSLTKNAGVPTTDQPQKGKDFTSD) are disordered. Residues 27–41 (PSLTKNAGVPTTDQP) are compositionally biased toward polar residues.

In terms of assembly, KG oxidoreductase (KOR) is composed of KorA and KorB subunits. The cofactor is Mg(2+).

It catalyses the reaction 2 oxidized [2Fe-2S]-[ferredoxin] + 2-oxoglutarate + CoA = succinyl-CoA + 2 reduced [2Fe-2S]-[ferredoxin] + CO2 + H(+). It functions in the pathway carbohydrate metabolism; tricarboxylic acid cycle. Its function is as follows. Component of KG oxidoreductase (KOR) that catalyzes the CoA-dependent oxidative decarboxylation of 2-oxoglutarate (alpha-ketoglutarate, KG) to succinyl-CoA. Methyl viologen can act as electron acceptor in vitro; the physiologic electron acceptor is unknown. Is involved in the alternative TCA pathway that functions concurrently with fatty acid beta-oxidation. Since a growing body of evidence indicates that lipids (for example cholesterol and fatty acids) are a predominant growth substrate for M.tuberculosis during infection, flux through KOR likely represents an important step in intermediary metabolism in vivo. KOR-dependent decarboxylation of KG also appears to be an important source of CO(2) in M.tuberculosis metabolism. The chain is 2-oxoglutarate oxidoreductase subunit KorB (korB) from Mycobacterium tuberculosis (strain ATCC 25618 / H37Rv).